Reading from the N-terminus, the 466-residue chain is 3-isopropylmalate dehydratase large subunit (466 aa).

[4Fe-4S] cluster is bound by residues C347, C407, and C410.

Belongs to the aconitase/IPM isomerase family. LeuC type 1 subfamily. As to quaternary structure, heterodimer of LeuC and LeuD. The cofactor is [4Fe-4S] cluster.

The catalysed reaction is (2R,3S)-3-isopropylmalate = (2S)-2-isopropylmalate. It functions in the pathway amino-acid biosynthesis; L-leucine biosynthesis; L-leucine from 3-methyl-2-oxobutanoate: step 2/4. Catalyzes the isomerization between 2-isopropylmalate and 3-isopropylmalate, via the formation of 2-isopropylmaleate. The sequence is that of 3-isopropylmalate dehydratase large subunit from Escherichia coli O127:H6 (strain E2348/69 / EPEC).